The chain runs to 55 residues: uncharacterized protein (55 aa).

The next 2 membrane-spanning stretches (helical) occupy residues valine 2 to alanine 19 and leucine 24 to phenylalanine 46.

The protein resides in the cell membrane. This is an uncharacterized protein from Alkalihalophilus pseudofirmus (strain ATCC BAA-2126 / JCM 17055 / OF4) (Bacillus pseudofirmus).